The sequence spans 350 residues: Inactive ADP-ribosyltransferase arh2 (350 aa).

It belongs to the ADP-ribosylglycohydrolase family.

The protein localises to the cytoplasm. Its subcellular location is the myofibril. It localises to the sarcomere. In terms of biological role, required for myofibril assembly and outgrowth of the cardiac chambers in the developing heart. Appears to be catalytically inactive, showing no activity against O-acetyl-ADP-ribose. This is Inactive ADP-ribosyltransferase arh2 (adprhl1) from Danio rerio (Zebrafish).